A 416-amino-acid chain; its full sequence is Putative cell agglutination protein SPAC1348.08c (416 aa).

The first 27 residues, 1–27 (MNFFLYFRTIFLIQLYFFNYSTFGCSA), serve as a signal peptide directing secretion. N-linked (GlcNAc...) asparagine glycosylation occurs at N19. Repeat copies occupy residues 90–124 (GTVTETTISGSTEYTTTIPAEGITSGTVEIVEPTA) and 125–160 (GTVTETITSGTLPFTTTLAQASGTVSGTVEIVSPKN). The 2 X 36 AA approximate tandem repeats stretch occupies residues 90-160 (GTVTETTISG…GTVEIVSPKN (71 aa)). The PA14 domain occupies 224–390 (FNEPAYFGSS…GPLATTSYSY (167 aa)). An N-linked (GlcNAc...) asparagine glycan is attached at N344.

It localises to the cell surface. May be involved in agglutination during conjugation or other aspects of colony formation. This Schizosaccharomyces pombe (strain 972 / ATCC 24843) (Fission yeast) protein is Putative cell agglutination protein SPAC1348.08c.